The primary structure comprises 119 residues: Hemerythrin subunit B (119 aa).

Fe cation contacts are provided by His-26, His-55, Glu-59, His-74, His-78, His-107, and Asp-112.

This sequence belongs to the hemerythrin family.

In terms of biological role, hemerythrin is a respiratory protein in blood cells of certain marine worms. The oxygen-binding site in each chain contains two iron atoms. The sequence is that of Hemerythrin subunit B from Sipunculus nudus (Sipunculan worm).